Here is a 261-residue protein sequence, read N- to C-terminus: 5-hmdU DNA kinase (261 aa).

It belongs to the thymidylate kinase family. 5-hmdU DNA kinase subfamily.

The catalysed reaction is 5-hydroxymethyl-dUMP in DNA + ATP = 5-phosphomethyl-dUMP in DNA + ADP + H(+). Its function is as follows. Phosphorylates 5-hydroxymethyluracil (5hmdU) into 5-phosphomethyl-2'-deoxyuridine (5- PmdU) on DNA as a step in the pathway leading to thymidine hypermodifications in the viral genome. As a final result of the pathway of hypermodification, 5-Nalpha-putrescinylthymidine (Nalpha-PutT) substitutes for about 50% of thymidines in the viral DNA. These modifications probably prevent degradation of viral genome by the host restriction-modification antiviral defense system. The sequence is that of 5-hmdU DNA kinase from Delftia phage PhiW-14 (Deftia acidovorans bacteriophage phiW-14).